A 227-amino-acid polypeptide reads, in one-letter code: ATP-dependent dethiobiotin synthetase BioD (227 aa).

13 to 18 (DAGKTT) is an ATP binding site. Mg(2+) is bound at residue Thr17. Lys38 is a catalytic residue. ATP-binding positions include Asp55, 118–121 (EGAG), 178–179 (NR), 207–209 (PYI), and Glu214. Mg(2+)-binding residues include Asp55 and Glu118.

The protein belongs to the dethiobiotin synthetase family. In terms of assembly, homodimer. Mg(2+) serves as cofactor.

The protein localises to the cytoplasm. The enzyme catalyses (7R,8S)-7,8-diammoniononanoate + CO2 + ATP = (4R,5S)-dethiobiotin + ADP + phosphate + 3 H(+). It functions in the pathway cofactor biosynthesis; biotin biosynthesis; biotin from 7,8-diaminononanoate: step 1/2. Its function is as follows. Catalyzes a mechanistically unusual reaction, the ATP-dependent insertion of CO2 between the N7 and N8 nitrogen atoms of 7,8-diaminopelargonic acid (DAPA, also called 7,8-diammoniononanoate) to form a ureido ring. This chain is ATP-dependent dethiobiotin synthetase BioD, found in Tolumonas auensis (strain DSM 9187 / NBRC 110442 / TA 4).